We begin with the raw amino-acid sequence, 345 residues long: S-adenosylmethionine:tRNA ribosyltransferase-isomerase (345 aa).

Belongs to the QueA family. In terms of assembly, monomer.

It localises to the cytoplasm. It carries out the reaction 7-aminomethyl-7-carbaguanosine(34) in tRNA + S-adenosyl-L-methionine = epoxyqueuosine(34) in tRNA + adenine + L-methionine + 2 H(+). It functions in the pathway tRNA modification; tRNA-queuosine biosynthesis. Functionally, transfers and isomerizes the ribose moiety from AdoMet to the 7-aminomethyl group of 7-deazaguanine (preQ1-tRNA) to give epoxyqueuosine (oQ-tRNA). The chain is S-adenosylmethionine:tRNA ribosyltransferase-isomerase from Shewanella loihica (strain ATCC BAA-1088 / PV-4).